The primary structure comprises 270 residues: Indole-3-glycerol phosphate synthase (270 aa).

It belongs to the TrpC family.

It carries out the reaction 1-(2-carboxyphenylamino)-1-deoxy-D-ribulose 5-phosphate + H(+) = (1S,2R)-1-C-(indol-3-yl)glycerol 3-phosphate + CO2 + H2O. The protein operates within amino-acid biosynthesis; L-tryptophan biosynthesis; L-tryptophan from chorismate: step 4/5. The chain is Indole-3-glycerol phosphate synthase from Beutenbergia cavernae (strain ATCC BAA-8 / DSM 12333 / CCUG 43141 / JCM 11478 / NBRC 16432 / NCIMB 13614 / HKI 0122).